A 3010-amino-acid chain; its full sequence is Genome polyprotein (3010 aa).

The residue at position 2 (Ser2) is an N-acetylserine; by host. The interaction with STAT1 stretch occupies residues 2 to 23; that stretch reads STNGKPQRKTKRNTNRRPQDVK. The interaction with EIF2AK2/PKR stretch occupies residues 2 to 58; sequence STNGKPQRKTKRNTNRRPQDVKFPGGGQIVGGVYLLPRRGPRLGVRATRKTWERSQP. Positions 2–59 are interaction with DDX3X; sequence STNGKPQRKTKRNTNRRPQDVKFPGGGQIVGGVYLLPRRGPRLGVRATRKTWERSQPR. Residues 2–75 are disordered; sequence STNGKPQRKT…PKARQPEGRA (74 aa). At 2-168 the chain is on the cytoplasmic side; that stretch reads STNGKPQRKT…EDGVNYATGN (167 aa). 4 consecutive short sequence motifs (nuclear localization signal) follow at residues 5–13, 38–43, 58–64, and 66–71; these read GKPQRKTKR, PRRGPR, PRGRRQP, and PKARQP. Basic residues predominate over residues 7–16; the sequence is PQRKTKRNTN. Position 99 is a phosphoserine; by host (Ser99). Residues 112–152 form an important for endoplasmic reticulum and mitochondrial localization region; sequence PRRRSRNLGKVIDTLTCGFADLMGYIPLVGAPLGGVARALA. Phosphoserine; by host PKA is present on Ser116. The interval 122-173 is interaction with APOA2; sequence VIDTLTCGFADLMGYIPLVGAPLGGVARALAHGVRVLEDGVNYATGNLPGCS. Residues 164 to 167 form an important for lipid droplets localization region; that stretch reads YATG. Residues 169 to 189 form a helical membrane-spanning segment; sequence LPGCSFSIFLLALLSCLTIPA. The propeptide at 178-191 is ER anchor for the core protein, removed in mature form by host signal peptidase; the sequence is LLALLSCLTIPASA. Over 190-358 the chain is Lumenal; the sequence is SAYEVHNVSG…GGAHWGVLAG (169 aa). N-linked (GlcNAc...) asparagine; by host glycosylation is found at Asn196, Asn209, Asn234, and Asn250. Residues 265-296 are important for fusion; sequence LVGAAAFCSAMYVGDLCGSVFLVSQLFTFSPR. An N-linked (GlcNAc...) asparagine; by host glycan is attached at Asn305. Residues 359-379 form a helical membrane-spanning segment; sequence LAYYSMVGNWAKVLIVMLLFA. The Lumenal segment spans residues 380-725; it reads GVDGSTIVSG…WEYILLLFLL (346 aa). The segment at 385–411 is HVR1; that stretch reads TIVSGGTVARTTHSLASLFTQGASQKI. Residues Asn417, Asn423, Asn430, and Asn448 are each glycosylated (N-linked (GlcNAc...) (high mannose) asparagine; by host). Disulfide bonds link Cys429–Cys552, Cys452–Cys459, Cys486–Cys494, and Cys503–Cys508. The tract at residues 474-479 is HVR2; the sequence is YTEADI. The interval 480–493 is CD81-binding 1; the sequence is QDQRPYCWHYAPRP. N-linked (GlcNAc...) (high mannose) asparagine; by host glycosylation occurs at Asn532. Residue Asn540 is glycosylated (N-linked (GlcNAc...) asparagine; by host). The tract at residues 544 to 551 is CD81-binding 2; the sequence is PPQGNWFG. N-linked (GlcNAc...) (high mannose) asparagine; by host glycosylation occurs at Asn556. A disulfide bridge connects residues Cys564 and Cys569. N-linked (GlcNAc...) (high mannose) asparagine; by host glycosylation occurs at Asn576. 3 disulfide bridges follow: Cys581/Cys585, Cys597/Cys620, and Cys607/Cys644. N-linked (GlcNAc...) (high mannose) asparagine; by host glycosylation is found at Asn623 and Asn645. Residues Cys652 and Cys677 are joined by a disulfide bond. The interval 660–671 is PKR/eIF2-alpha phosphorylation homology domain (PePHD); the sequence is SELSPLLLSTTE. Residues 726–746 form a helical membrane-spanning segment; sequence LADARVCACLWMMLLIAQAEA. Topologically, residues 747–757 are lumenal; the sequence is ALENLVVFNAA. The chain crosses the membrane as a helical span at residues 758 to 778; the sequence is SVAGMHGTLSFLVFFCAAWYI. Residues 779–781 lie on the Cytoplasmic side of the membrane; that stretch reads KGR. The chain crosses the membrane as a helical span at residues 782 to 803; sequence LVPGAAYALYGVWPLLLLLLAL. The Lumenal segment spans residues 804 to 813; the sequence is PPRAYAMDRE. Residues 814–834 form a helical membrane-spanning segment; sequence MAASCGGAVFVGLVLLTLSPH. The Cytoplasmic portion of the chain corresponds to 835 to 838; sequence YKMF. The helical transmembrane segment at 839–859 threads the bilayer; it reads LARLIWWLQYFITRAEAHLQV. The Lumenal portion of the chain corresponds to 860–881; sequence WIPPLNVRGGRDAIILLTCAAY. The helical transmembrane segment at 882 to 902 threads the bilayer; that stretch reads PELIFDITKILLAILGPLMVL. In terms of domain architecture, Peptidase C18 spans 903 to 1026; the sequence is QAGLTRIPYF…SLEGRGWRLL (124 aa). Over 903–1657 the chain is Cytoplasmic; the sequence is QAGLTRIPYF…CMSADLEVVT (755 aa). Residues 904 to 1206 are protease NS2-3; sequence AGLTRIPYFV…PVESMETTMR (303 aa). The S-palmitoyl cysteine; by host moiety is linked to residue Cys922. An interaction with host SCPS1 region spans residues 929–949; the sequence is AGGHYVQMALMKLAALTGTYV. Active-site for protease NS2 activity; shared with dimeric partner residues include His952, Glu972, and Cys993. The Peptidase S29 domain occupies 1027-1208; it reads APITAYAQQT…ESMETTMRSP (182 aa). Catalysis depends on charge relay system; for serine protease NS3 activity residues His1083 and Asp1107. Residues Cys1123 and Cys1125 each contribute to the Zn(2+) site. The active-site Charge relay system; for serine protease NS3 activity is the Ser1165. 2 residues coordinate Zn(2+): Cys1171 and His1175. The region spanning 1217–1369 is the Helicase ATP-binding domain; that stretch reads PAVPQAFQVA…PNIEEIALSN (153 aa). An ATP-binding site is contributed by 1230–1237; the sequence is APTGSGKS. The Mg(2+) site is built by Ser1237 and Glu1317. The DECH box signature appears at 1316–1319; sequence DECH. Residues 1486 to 1497 are RNA-binding; the sequence is QRRGRTSRGRRG. Residues 1658–1678 form a helical membrane-spanning segment; the sequence is STWVLVGGVLAALAAYCLTTG. The NS3-binding stretch occupies residues 1679–1690; the sequence is SVVIVGRIILSG. The Cytoplasmic segment spans residues 1679 to 1805; sequence SVVIVGRIIL…SITSPLTTQS (127 aa). A helical membrane pass occupies residues 1806–1824; the sequence is TLLFNILGGWVAAQLAPPG. At 1825-1828 the chain is on the lumenal side; sequence AASA. Residues 1829 to 1849 traverse the membrane as a helical segment; the sequence is FVGAGIAGAAVGSIGLGKVLV. Position 1850 (Asp1850) is a topological domain, cytoplasmic. A helical transmembrane segment spans residues 1851–1871; the sequence is MVAGYGAGVAGALVAFKVMSG. Residues 1872 to 1881 lie on the Lumenal side of the membrane; that stretch reads EMPSTEDLVN. The chain crosses the membrane as a helical span at residues 1882-1902; that stretch reads LLPAILSPGALVVGVVCAAIL. The Cytoplasmic segment spans residues 1903-1972; the sequence is RRHVDPGEGA…WINEDCSTPC (70 aa). Residues Cys1968 and Cys1972 are each lipidated (S-palmitoyl cysteine; by host). The stretch at 1973–2002 is an intramembrane region; the sequence is SGSWLRDVWDWICTVLADFKTWLQSKLLPR. At 2003–2989 the chain is on the cytoplasmic side; it reads LPGVPFFSCQ…YHSLSRARPR (987 aa). Zn(2+)-binding residues include Cys2011, Cys2029, Cys2031, and Cys2052. The FKBP8-binding stretch occupies residues 2120 to 2208; that stretch reads EFFTEVDGVR…ASSSASQLSA (89 aa). The segment at 2120 to 2332 is transcriptional activation; it reads EFFTEVDGVR…PIPPPRRKRT (213 aa). The segment at 2135–2139 is interaction with non-structural protein 4A; the sequence is PACKP. The tract at residues 2189–2441 is interaction with host SKP2; sequence RLARGSPPSL…PCAAEESKLP (253 aa). Ser2194 bears the Phosphoserine; by host; in p56 mark. Phosphoserine; by host; in p58 is present on residues Ser2197, Ser2201, Ser2204, Ser2207, and Ser2210. The tract at residues 2210-2249 is ISDR; it reads SLKAACTTRHTPPDADLIEANLLWRQEMGGNITRVESENK. The interval 2210–2275 is interaction with EIF2AK2/PKR; sequence SLKAACTTRH…REVSVPAEIL (66 aa). The tract at residues 2249-2306 is NS4B-binding; it reads KVVILDSFDPLRAEEDEREVSVPAEILRKSRKFPPALPVWARPDYNPPLLEPWKDPDY. The SH3-binding motif lies at 2322–2325; the sequence is PPIP. The Nuclear localization signal motif lies at 2326 to 2334; sequence PPRRKRTVV. Residue Lys2350 forms a Glycyl lysine isopeptide (Lys-Gly) (interchain with G-Cter in ubiquitin) linkage. The segment covering 2351–2367 has biased composition (low complexity); it reads TFGSSESSAAGSGTATA. Residues 2351–2409 are disordered; that stretch reads TFGSSESSAAGSGTATAPPDQPSDDGDAGSDVESCSSMPPLEGEPGDPDLSDGSWSTVS. The tract at residues 2354–2377 is V3; that stretch reads SSESSAAGSGTATAPPDQPSDDGD. 2 positions are modified to phosphoserine; by host: Ser2448 and Ser2461. The region spanning 2633-2751 is the RdRp catalytic domain; that stretch reads PMGFSYDTRC…ICESAGTQED (119 aa). 3 residues coordinate Mg(2+): Asp2639, Asp2737, and Asp2738. The helical transmembrane segment at 2990–3010 threads the bilayer; it reads WFMLCLLLLSVGVGIYLLPNR.

This sequence belongs to the hepacivirus polyprotein family. As to quaternary structure, homooligomer. Interacts with E1 (via C-terminus). Interacts with the non-structural protein 5A. Interacts (via N-terminus) with host STAT1 (via SH2 domain); this interaction results in decreased STAT1 phosphorylation and ubiquitin-mediated proteasome-dependent STAT1 degradation, leading to decreased IFN-stimulated gene transcription. Interacts with host STAT3; this interaction constitutively activates STAT3. Interacts with host LTBR receptor. Interacts with host TNFRSF1A receptor and possibly induces apoptosis. Interacts with host HNRPK. Interacts with host YWHAE. Interacts with host UBE3A/E6AP. Interacts with host DDX3X. Interacts with host APOA2. Interacts with host RXRA protein. Interacts with host SP110 isoform 3/Sp110b; this interaction sequesters the transcriptional corepressor SP110 away from the nucleus. Interacts with host CREB3 nuclear transcription protein; this interaction triggers cell transformation. Interacts with host ACY3. Interacts with host C1QR1. Interacts with host RBM24; this interaction, which enhances the interaction of the mature core protein with 5'-UTR, may inhibit viral translation and favor replication. Interacts with host EIF2AK2/PKR; this interaction induces the autophosphorylation of EIF2AK2. Part of the viral assembly initiation complex composed of NS2, E1, E2, NS3, NS4A, NS5A and the mature core protein. In terms of assembly, forms a heterodimer with envelope glycoprotein E2. Interacts with mature core protein. Interacts with protease NS2. The heterodimer E1/E2 interacts with host CLDN1; this interaction plays a role in viral entry into host cell. Interacts with host SPSB2 (via C-terminus). Part of the viral assembly initiation complex composed of NS2, E1, E2, NS3, NS4A, NS5A and the mature core protein. Interacts with host NEURL3; this interaction prevents E1 binding to glycoprotein E2. Forms a heterodimer with envelope glycoprotein E1. Interacts with host CD81 and SCARB1 receptors; these interactions play a role in viral entry into host cell. Interacts with host EIF2AK2/PKR; this interaction inhibits EIF2AK2 and probably allows the virus to evade the innate immune response. Interacts with host CD209/DC-SIGN and CLEC4M/DC-SIGNR. Interact with host SPCS1; this interaction is essential for viral particle assembly. Interacts with protease NS2. The heterodimer E1/E2 interacts with host CLDN1; this interaction plays a role in viral entry into host cell. Part of the viral assembly initiation complex composed of NS2, E1, E2, NS3, NS4A, NS5A and the mature core protein. Interacts with host SLC3A2/4F2hc; the interaction may facilitate viral entry into host cell. Interacts with human PLSCR1. As to quaternary structure, homohexamer. Homoheptamer. Interacts with protease NS2. In terms of assembly, homodimer. Interacts with host SPCS1; this interaction is essential for viral particle assembly. Interacts with envelope glycoprotein E1. Interacts with envelope glycoprotein E2. Interacts with viroporin p7. Interacts with serine protease/helicase NS3. Part of the replication complex composed of NS2, NS3, NS4A, NS4B, NS5A and the RNA-directed RNA polymerase embedded in an ER-derived membranous web. Part of the viral assembly initiation complex composed of NS2, E1, E2, NS3, NS4A, NS5A and the mature core protein. Interacts with protease NS2. Interacts with non-structural protein 4A; this interaction stabilizes the folding of NS3 serine protease. NS3-NS4A interaction is essential for NS3 activation and allows membrane anchorage of the latter. NS3/NS4A complex also prevents phosphorylation of host IRF3, thus preventing the establishment of dsRNA induced antiviral state. Interacts with host MAVS; this interaction leads to the cleavage and inhibition of host MAVS. Interacts with host TICAM1; this interaction leads to the cleavage and inhibition of host TICAM1. Interacts with host TANK-binding kinase/TBK1; this interaction results in the inhibition of the association between TBK1 and IRF3, which leads to the inhibition of IRF3 activation. Interacts with host RBM24. Part of the replication complex composed of NS2, NS3, NS4A, NS4B, NS5A and the RNA-directed RNA polymerase embedded in an ER-derived membranous web. Part of the viral assembly initiation complex composed of NS2, E1, E2, NS3, NS4A, NS5A and the mature core protein. As to quaternary structure, interacts with NS3 serine protease; this interaction stabilizes the folding of NS3 serine protease. NS3-NS4A interaction is essential for NS3 activation and allows membrane anchorage of the latter. Interacts with non-structural protein 5A (via N-terminus). Part of the replication complex composed of NS2, NS3, NS4A, NS4B, NS5A and the RNA-directed RNA polymerase embedded in an ER-derived membranous web. Part of the viral assembly initiation complex composed of NS2, E1, E2, NS3, NS4A, NS5A and the mature core protein. In terms of assembly, homomultimer. Interacts with non-structural protein NS5A. Interacts with host PLA2G4C; this interaction likely initiates the recruitment of replication complexes to lipid droplets. Interacts with host STING; this interaction disrupts the interaction between STING and TBK1 thereby suppressing the interferon signaling. Part of the replication complex composed of NS2, NS3, NS4A, NS4B, NS5A and the RNA-directed RNA polymerase embedded in an ER-derived membranous web. Monomer. Homodimer; dimerization is required for RNA-binding. Interacts with the mature core protein. Interacts (via N-terminus) with non-structural protein 4A. Interacts with non-structural protein 4B. Interacts (via region D2) with RNA-directed RNA polymerase. Part of the viral assembly initiation complex composed of NS2, E1, E2, NS3, NS4A, NS5A and the mature core protein. Part of the replication complex composed of NS2, NS3, NS4A, NS4B, NS5A and the RNA-directed RNA polymerase embedded in an ER-derived membranous web. Interacts with host GRB2. Interacts with host BIN1. Interacts with host PIK3R1. Interacts with host SRCAP. Interacts with host FKBP8. Interacts (via C-terminus) with host VAPB (via MSP domain). Interacts with host EIF2AK2/PKR; this interaction leads to disruption of EIF2AK2 dimerization by NS5A and probably allows the virus to evade the innate immune response. Interacts (via N-terminus) with host PACSIN2 (via N-terminus); this interaction attenuates protein kinase C alpha-mediated phosphorylation of PACSIN2 by disrupting the interaction between PACSIN2 and PRKCA. Interacts (via N-terminus) with host SRC kinase (via SH2 domain). Interacts with most Src-family kinases. Interacts with host IFI27 and SKP2; promotes the ubiquitin-mediated proteasomal degradation of NS5A. Interacts with host GPS2. Interacts with host TNFRSF21; this interaction allows the modulation by the virus of JNK, p38 MAPK, STAT3, and Akt signaling pathways in a DR6-dependent manner. Interacts (via N-terminus) with host CIDEB (via N-terminus); this interaction seems to regulate the association of HCV particles with APOE. Interacts with host CHKA/Choline Kinase-alpha; CHKA bridges host PI4KA and NS5A and potentiates NS5A-stimulated PI4KA activity, which then facilitates the targeting of the ternary complex to the ER for viral replication. Interacts with host SPSB2 (via C-terminus); this interaction targets NS5A for ubiquitination and degradation. Interacts with host RAB18; this interaction may promote the association of NS5A and other replicase components with lipid droplets. Interacts (via region D2) with host PPIA/CYPA; the interaction stimulates RNA-binding ability of NS5A and is dependent on the peptidyl-prolyl cis-trans isomerase activity of PPIA/CYPA. Interacts with host TRIM14; this interaction induces the degradation of NS5A. As to quaternary structure, homooligomer. Interacts with non-structural protein 5A. Interacts with host VAPB. Interacts with host PRK2/PKN2. Interacts with host HNRNPA1 and SEPT6; these interactions facilitate viral replication. Part of the replication complex composed of NS2, NS3, NS4A, NS4B, NS5A and the RNA-directed RNA polymerase. Zn(2+) serves as cofactor. Mg(2+) is required as a cofactor. Specific enzymatic cleavages in vivo yield mature proteins. The structural proteins, core, E1, E2 and p7 are produced by proteolytic processing by host signal peptidases. The core protein precursor is synthesized as a 23 kDa, which is retained in the ER membrane through the hydrophobic signal peptide. Cleavage by the signal peptidase releases the 21 kDa mature core protein. The cleavage of the core protein precursor occurs between aminoacids 176 and 188 but the exact cleavage site is not known. Some degraded forms of the core protein appear as well during the course of infection. The other proteins (p7, NS2, NS3, NS4A, NS4B, NS5A and NS5B) are cleaved by the viral proteases. Autoprocessing between NS2 and NS3 is mediated by the NS2 cysteine protease catalytic domain and regulated by the NS3 N-terminal domain. Post-translationally, phosphorylated by host PKC and PKA. In terms of processing, ubiquitinated; mediated by UBE3A and leading to core protein subsequent proteasomal degradation. Highly N-glycosylated. Post-translationally, palmitoylation is required for NS2/3 autoprocessing and E2 recruitment to membranes. In terms of processing, palmitoylated. This modification may play a role in its polymerization or in protein-protein interactions. Phosphorylated on serines in a basal form termed p56. p58 is a hyperphosphorylated form of p56. p56 and p58 coexist in the cell in roughly equivalent amounts. Hyperphosphorylation is dependent on the presence of NS4A. Host CSNK1A1/CKI-alpha or RPS6KB1 kinases may be responsible for NS5A phosphorylation. Post-translationally, tyrosine phosphorylation is essential for the interaction with host SRC. In terms of processing, the N-terminus is phosphorylated by host PRK2/PKN2. Ubiquitinated. Ubiquitination, most probably at Lys-2350, mediated by host IFI27 and SKP2 leads to proteasomal degradation, restricting viral infection. Ubiquitination by host TRIM22 leads to interruption of viral replication.

The protein resides in the host endoplasmic reticulum membrane. It is found in the host mitochondrion membrane. It localises to the virion. Its subcellular location is the host cytoplasm. The protein localises to the host nucleus. The protein resides in the host lipid droplet. It is found in the virion membrane. It localises to the host mitochondrion. Its subcellular location is the host cell membrane. The protein localises to the host perinuclear region. It carries out the reaction Hydrolysis of four peptide bonds in the viral precursor polyprotein, commonly with Asp or Glu in the P6 position, Cys or Thr in P1 and Ser or Ala in P1'.. The catalysed reaction is a ribonucleoside 5'-triphosphate + H2O = a ribonucleoside 5'-diphosphate + phosphate + H(+). The enzyme catalyses ATP + H2O = ADP + phosphate + H(+). It catalyses the reaction RNA(n) + a ribonucleoside 5'-triphosphate = RNA(n+1) + diphosphate. Its activity is regulated as follows. Inhibited by the antiviral drug hexamethylene amiloride. Inhibition by amantadine appears to be genotype-dependent. Also inhibited by long-alkyl-chain iminosugar derivatives. Activity is up-regulated by PRK2/PKN2-mediated phosphorylation. Its function is as follows. Packages viral RNA to form a viral nucleocapsid, and promotes virion budding. Participates in the viral particle production as a result of its interaction with the non-structural protein 5A. Binds RNA and may function as a RNA chaperone to induce the RNA structural rearrangements taking place during virus replication. Modulates viral translation initiation by interacting with viral IRES and 40S ribosomal subunit. Affects various cell signaling pathways, host immunity and lipid metabolism. Prevents the establishment of cellular antiviral state by blocking the interferon-alpha/beta (IFN-alpha/beta) and IFN-gamma signaling pathways and by blocking the formation of phosphorylated STAT1 and promoting ubiquitin-mediated proteasome-dependent degradation of STAT1. Activates STAT3 leading to cellular transformation. Regulates the activity of cellular genes, including c-myc and c-fos. May repress the promoter of p53, and sequester CREB3 and SP110 isoform 3/Sp110b in the cytoplasm. Represses cell cycle negative regulating factor CDKN1A, thereby interrupting an important check point of normal cell cycle regulation. Targets transcription factors involved in the regulation of inflammatory responses and in the immune response: suppresses TNF-induced NF-kappa-B activation, and activates AP-1. Binds to dendritic cells (DCs) via C1QR1, resulting in down-regulation of T-lymphocytes proliferation. Alters lipid metabolism by interacting with hepatocellular proteins involved in lipid accumulation and storage. Induces up-regulation of FAS promoter activity, and thereby contributes to the increased triglyceride accumulation in hepatocytes (steatosis). Forms a heterodimer with envelope glycoprotein E2, which mediates virus attachment to the host cell, virion internalization through clathrin-dependent endocytosis and fusion with host membrane. Fusion with the host cell is most likely mediated by both E1 and E2, through conformational rearrangements of the heterodimer required for fusion rather than a classical class II fusion mechanism. E1/E2 heterodimer binds host apolipoproteins such as APOB and ApoE thereby forming a lipo-viro-particle (LVP). APOE associated to the LVP allows the initial virus attachment to cell surface receptors such as the heparan sulfate proteoglycans (HSPGs), syndecan-1 (SDC1), syndecan-1 (SDC2), the low-density lipoprotein receptor (LDLR) and scavenger receptor class B type I (SCARB1). The cholesterol transfer activity of SCARB1 allows E2 exposure and binding of E2 to SCARB1 and the tetraspanin CD81. E1/E2 heterodimer binding on CD81 activates the epithelial growth factor receptor (EGFR) signaling pathway. Diffusion of the complex E1-E2-EGFR-SCARB1-CD81 to the cell lateral membrane allows further interaction with Claudin 1 (CLDN1) and occludin (OCLN) to finally trigger HCV entry. Functionally, forms a heterodimer with envelope glycoprotein E1, which mediates virus attachment to the host cell, virion internalization through clathrin-dependent endocytosis and fusion with host membrane. Fusion with the host cell is most likely mediated by both E1 and E2, through conformational rearrangements of the heterodimer required for fusion rather than a classical class II fusion mechanism. The interaction between envelope glycoprotein E2 and host apolipoprotein E/APOE allows the proper assembly, maturation and infectivity of the viral particles. This interaction is probably promoted via the up-regulation of cellular autophagy by the virus. E1/E2 heterodimer binds host apolipoproteins such as APOB and APOE thereby forming a lipo-viro-particle (LVP). APOE associated to the LVP allows the initial virus attachment to cell surface receptors such as the heparan sulfate proteoglycans (HSPGs), syndecan-1 (SDC1), syndecan-1 (SDC2), the low-density lipoprotein receptor (LDLR) and scavenger receptor class B type I (SCARB1). The cholesterol transfer activity of SCARB1 allows E2 exposure and binding of E2 to SCARB1 and the tetraspanin CD81. E1/E2 heterodimer binding on CD81 activates the epithelial growth factor receptor (EGFR) signaling pathway. Diffusion of the complex E1-E2-EGFR-SCARB1-CD81 to the cell lateral membrane allows further interaction with Claudin 1 (CLDN1) and occludin (OCLN) to finally trigger HCV entry. Inhibits host EIF2AK2/PKR activation, preventing the establishment of an antiviral state. Viral ligand for CD209/DC-SIGN and CLEC4M/DC-SIGNR, which are respectively found on dendritic cells (DCs), and on liver sinusoidal endothelial cells and macrophage-like cells of lymph node sinuses. These interactions allow the capture of circulating HCV particles by these cells and subsequent facilitated transmission to permissive cells such as hepatocytes and lymphocyte subpopulations. The interaction between E2 and host amino acid transporter complex formed by SLC3A2 and SLC7A5/LAT1 may facilitate viral entry into host cell. In terms of biological role, ion channel protein that acts as a viroporin and plays an essential role in the assembly, envelopment and secretion of viral particles. Regulates the host cell secretory pathway, which induces the intracellular retention of viral glycoproteins and favors assembly of viral particles. Creates a pore in acidic organelles and releases Ca(2+) and H(+) in the cytoplasm of infected cells, leading to a productive viral infection. High levels of cytoplasmic Ca(2+) may trigger membrane trafficking and transport of viral ER-associated proteins to viroplasms, sites of viral genome replication. This ionic imbalance induces the assembly of the inflammasome complex, which triggers the maturation of pro-IL-1beta into IL-1beta through the action of caspase-1. Targets also host mitochondria and induces mitochondrial depolarization. In addition of its role as a viroporin, acts as a lipid raft adhesion factor. Its function is as follows. Cysteine protease required for the proteolytic auto-cleavage between the non-structural proteins NS2 and NS3. The N-terminus of NS3 is required for the function of NS2 protease (active region NS2-3). Promotes the initiation of viral particle assembly by mediating the interaction between structural and non-structural proteins. Displays three enzymatic activities: serine protease with a chymotrypsin-like fold, NTPase and RNA helicase. NS3 serine protease, in association with NS4A, is responsible for the cleavages of NS3-NS4A, NS4A-NS4B, NS4B-NS5A and NS5A-NS5B. The NS3/NS4A complex prevents phosphorylation of host IRF3, thus preventing the establishment of dsRNA induced antiviral state. The NS3/NS4A complex induces host amino acid transporter component SLC3A2, thus contributing to HCV propagation. NS3 RNA helicase binds to RNA and unwinds both dsDNA and dsRNA in the 3' to 5' direction, and likely resolves RNA complicated stable secondary structures in the template strand. Binds a single ATP and catalyzes the unzipping of a single base pair of dsRNA. Inhibits host antiviral proteins TBK1 and IRF3 thereby preventing the establishment of an antiviral state. Cleaves host MAVS/CARDIF thereby preventing the establishment of an antiviral state. Cleaves host TICAM1/TRIF, thereby disrupting TLR3 signaling and preventing the establishment of an antiviral state. Functionally, peptide cofactor which forms a non-covalent complex with the N-terminal of NS3 serine protease. The NS3/NS4A complex prevents phosphorylation of host IRF3, thus preventing the establishment of dsRNA induced antiviral state. The NS3/NS4A complex induces host amino acid transporter component SLC3A2, thus contributing to HCV propagation. In terms of biological role, induces a specific membrane alteration that serves as a scaffold for the virus replication complex. This membrane alteration gives rise to the so-called ER-derived membranous web that contains the replication complex. NS4B self-interaction contributes to its function in membranous web formation. Promotes host TRIF protein degradation in a CASP8-dependent manner thereby inhibiting host TLR3-mediated interferon signaling. Disrupts the interaction between STING and TBK1 contributing to the inhibition of interferon signaling. Its function is as follows. Phosphorylated protein that is indispensable for viral replication and assembly. Both hypo- and hyperphosphorylated states are required for the viral life cycle. The hyperphosphorylated form of NS5A is an inhibitor of viral replication. Involved in RNA-binding and especially in binding to the viral genome. Zinc is essential for RNA-binding. Participates in the viral particle production as a result of its interaction with the mature viral core protein. Its interaction with host VAPB may target the viral replication complex to vesicles. Down-regulates viral IRES translation initiation. Mediates interferon resistance, presumably by interacting with and inhibiting host EIF2AK2/PKR. Prevents BIN1-induced apoptosis. Acts as a transcriptional activator of some host genes important for viral replication when localized in the nucleus. Via the interaction with host PACSIN2, modulates lipid droplet formation in order to promote virion assembly. Modulates TNFRSF21/DR6 signaling pathway for viral propagation. RNA-dependent RNA polymerase that performs primer-template recognition and RNA synthesis during viral replication. Initiates RNA transcription/replication at a flavin adenine dinucleotide (FAD), resulting in a 5'- FAD cap on viral RNAs. In this way, recognition of viral 5' RNA by host pattern recognition receptors can be bypassed, thereby evading activation of antiviral pathways. The chain is Genome polyprotein from Hepatitis C virus genotype 1b (isolate Taiwan) (HCV).